Consider the following 130-residue polypeptide: Cystatin (130 aa).

The signal sequence occupies residues 1–19; the sequence is MEWKIVVPLLAVAFTVANA. A Secondary area of contact motif is present at residues 67 to 71; it reads QVVSG. Disulfide bonds link C85–C94 and C108–C128.

It belongs to the cystatin family. As to expression, ubiquitous expression including brain, white muscle, heart, gill, kidney, spleen, liver and skin with the highest and lowest level in brain and gill, respectively.

Its subcellular location is the secreted. In terms of biological role, cysteine proteinase inhibitor. The protein is Cystatin of Oncorhynchus keta (Chum salmon).